The following is a 312-amino-acid chain: 2,3-dihydroxyphenylpropionate/2,3-dihydroxicinnamic acid 1,2-dioxygenase (312 aa).

Catalysis depends on His115, which acts as the Proton donor. His179 (proton acceptor) is an active-site residue.

The protein belongs to the LigB/MhpB extradiol dioxygenase family. In terms of assembly, homotetramer. Fe(2+) is required as a cofactor.

The catalysed reaction is 3-(2,3-dihydroxyphenyl)propanoate + O2 = (2Z,4E)-2-hydroxy-6-oxonona-2,4-dienedioate + H(+). It carries out the reaction (2E)-3-(2,3-dihydroxyphenyl)prop-2-enoate + O2 = (2Z,4E,7E)-2-hydroxy-6-oxonona-2,4,7-trienedioate + H(+). It functions in the pathway aromatic compound metabolism; 3-phenylpropanoate degradation. In terms of biological role, catalyzes the non-heme iron(II)-dependent oxidative cleavage of 2,3-dihydroxyphenylpropionic acid and 2,3-dihydroxicinnamic acid into 2-hydroxy-6-ketononadienedioate and 2-hydroxy-6-ketononatrienedioate, respectively. The chain is 2,3-dihydroxyphenylpropionate/2,3-dihydroxicinnamic acid 1,2-dioxygenase from Azotobacter vinelandii (strain DJ / ATCC BAA-1303).